The chain runs to 386 residues: Probable Xaa-Pro aminopeptidase PMAA_074180 (386 aa).

The Mn(2+) site is built by D160, D171, E311, and E350.

Belongs to the peptidase M24B family. Requires Mn(2+) as cofactor.

The catalysed reaction is Release of any N-terminal amino acid, including proline, that is linked to proline, even from a dipeptide or tripeptide.. Its function is as follows. Catalyzes the removal of a penultimate prolyl residue from the N-termini of peptides. The polypeptide is Probable Xaa-Pro aminopeptidase PMAA_074180 (Talaromyces marneffei (strain ATCC 18224 / CBS 334.59 / QM 7333) (Penicillium marneffei)).